Reading from the N-terminus, the 688-residue chain is Translation initiation factor IF-2 (688 aa).

Basic and acidic residues predominate over residues 50 to 62 (LLSGKEKSEKTKE). The interval 50-95 (LLSGKEKSEKTKEEDDEIETTAKNPIKESINNKKSNKRDDKNEKVN) is disordered. Residues 72-82 (KNPIKESINNK) show a composition bias toward low complexity. A compositionally biased stretch (basic and acidic residues) spans 86 to 95 (KRDDKNEKVN). Residues 187 to 354 (KRSPIITVMG…MILLSSEILE (168 aa)) form the tr-type G domain. Residues 196 to 203 (GHVDHGKT) form a G1 region. Residue 196–203 (GHVDHGKT) participates in GTP binding. The tract at residues 221–225 (GITQH) is G2. Residues 242-245 (DTPG) form a G3 region. GTP is bound by residues 242–246 (DTPGH) and 296–299 (NKID). Residues 296–299 (NKID) are G4. The interval 332–334 (SAH) is G5.

The protein belongs to the TRAFAC class translation factor GTPase superfamily. Classic translation factor GTPase family. IF-2 subfamily.

The protein localises to the cytoplasm. One of the essential components for the initiation of protein synthesis. Protects formylmethionyl-tRNA from spontaneous hydrolysis and promotes its binding to the 30S ribosomal subunits. Also involved in the hydrolysis of GTP during the formation of the 70S ribosomal complex. The protein is Translation initiation factor IF-2 of Clostridium botulinum (strain Langeland / NCTC 10281 / Type F).